Reading from the N-terminus, the 232-residue chain is Phosphate-specific transport system accessory protein PhoU homolog 1 (232 aa).

This sequence belongs to the PhoU family. As to quaternary structure, homodimer.

It is found in the cytoplasm. Functionally, plays a role in the regulation of phosphate uptake. This chain is Phosphate-specific transport system accessory protein PhoU homolog 1 (phoU1), found in Thermotoga maritima (strain ATCC 43589 / DSM 3109 / JCM 10099 / NBRC 100826 / MSB8).